The sequence spans 190 residues: Segregation and condensation protein B (190 aa).

It belongs to the ScpB family. In terms of assembly, homodimer. Homodimerization may be required to stabilize the binding of ScpA to the Smc head domains. Component of a cohesin-like complex composed of ScpA, ScpB and the Smc homodimer, in which ScpA and ScpB bind to the head domain of Smc. The presence of the three proteins is required for the association of the complex with DNA.

Its subcellular location is the cytoplasm. Its function is as follows. Participates in chromosomal partition during cell division. May act via the formation of a condensin-like complex containing Smc and ScpA that pull DNA away from mid-cell into both cell halves. The polypeptide is Segregation and condensation protein B (Bacillus thuringiensis subsp. konkukian (strain 97-27)).